The chain runs to 353 residues: Polyadenylate-binding protein-interacting protein 10 (353 aa).

Residues 1–61 are disordered; sequence MAVAENAGVK…IDSTPETDDR (61 aa). Positions 20-31 are enriched in low complexity; it reads NNNTAASATETT. A PAM2-like motif is present at residues 96 to 106; the sequence is KLNPMAQEFVP. Residues 128–159 are disordered; the sequence is AAPPKLADGNDHFPRRRRSFGQGKRRMNKRTS. Over residues 141–156 the composition is skewed to basic residues; the sequence is PRRRRSFGQGKRRMNK. The Bipartite nuclear localization signal signature appears at 142-153; sequence RRRRSFGQGKRR. 2 RRM domains span residues 169–244 and 266–341; these read RTVY…PSKT.

As to expression, expressed in cauline leaves, stems, rosette leaves, immature siliques and primary inflorescences.

Its subcellular location is the nucleus. The polypeptide is Polyadenylate-binding protein-interacting protein 10 (CID10) (Arabidopsis thaliana (Mouse-ear cress)).